The primary structure comprises 507 residues: Eukaryotic translation initiation factor 4E-binding protein Mextli homolog (507 aa).

The interval 126 to 163 (RPEGQHDPAPTVGIPPSATSPPTQVTSSVTSPVPSSPQ) is disordered. A compositionally biased stretch (low complexity) spans 140–158 (PPSATSPPTQVTSSVTSPV). The KH domain maps to 242-307 (QLRHEMIIRN…EDIERAKDMI (66 aa)). Disordered stretches follow at residues 314–360 (NMSP…DEDI) and 395–424 (ARPSAEEREKKKERRKSMPLQQTARDQQEP). Over residues 329 to 348 (QYSGMSSENQSIPSQQNTAN) the composition is skewed to polar residues. Positions 349–360 (IDEDDDDDDEDI) are enriched in acidic residues.

As to quaternary structure, interacts with eukaryotic translation initiation factor ife-3.

It localises to the cytoplasm. Its function is as follows. Plays a role in promoting translation. In Caenorhabditis elegans, this protein is Eukaryotic translation initiation factor 4E-binding protein Mextli homolog.